The chain runs to 518 residues: Ribonuclease Y (518 aa).

The chain crosses the membrane as a helical span at residues 2–22 (GSIIISALLALVIGAVVGFFV). The KH domain maps to 208 to 271 (TVSVVNLPND…ETARIALDKL (64 aa)). The region spanning 334–427 (VLKHSVEVAF…VAAADALSAA (94 aa)) is the HD domain.

It belongs to the RNase Y family.

It localises to the cell membrane. Its function is as follows. Endoribonuclease that initiates mRNA decay. The sequence is that of Ribonuclease Y from Geobacillus thermodenitrificans (strain NG80-2).